The chain runs to 355 residues: UDP-N-acetylglucosamine--N-acetylmuramyl-(pentapeptide) pyrophosphoryl-undecaprenol N-acetylglucosamine transferase (355 aa).

UDP-N-acetyl-alpha-D-glucosamine contacts are provided by residues 15–17 (TGG), Asn-127, Arg-163, Ser-191, Ile-244, 263–268 (ALTVSE), and Gln-288.

This sequence belongs to the glycosyltransferase 28 family. MurG subfamily.

It localises to the cell inner membrane. The catalysed reaction is di-trans,octa-cis-undecaprenyl diphospho-N-acetyl-alpha-D-muramoyl-L-alanyl-D-glutamyl-meso-2,6-diaminopimeloyl-D-alanyl-D-alanine + UDP-N-acetyl-alpha-D-glucosamine = di-trans,octa-cis-undecaprenyl diphospho-[N-acetyl-alpha-D-glucosaminyl-(1-&gt;4)]-N-acetyl-alpha-D-muramoyl-L-alanyl-D-glutamyl-meso-2,6-diaminopimeloyl-D-alanyl-D-alanine + UDP + H(+). The protein operates within cell wall biogenesis; peptidoglycan biosynthesis. Its function is as follows. Cell wall formation. Catalyzes the transfer of a GlcNAc subunit on undecaprenyl-pyrophosphoryl-MurNAc-pentapeptide (lipid intermediate I) to form undecaprenyl-pyrophosphoryl-MurNAc-(pentapeptide)GlcNAc (lipid intermediate II). The sequence is that of UDP-N-acetylglucosamine--N-acetylmuramyl-(pentapeptide) pyrophosphoryl-undecaprenol N-acetylglucosamine transferase from Escherichia coli O157:H7.